A 704-amino-acid polypeptide reads, in one-letter code: Protein polyglycylase TTLL10 (704 aa).

Disordered regions lie at residues 1–32, 46–125, and 137–170; these read MALH…LPSP, GHRA…SVKE, and DADD…PGQG. Residues 93 to 105 show a composition bias toward basic residues; sequence VSSKRSKRSRIHP. Positions 114–125 are enriched in basic and acidic residues; that stretch reads THEKQMGSSVKE. Positions 169–540 constitute a TTL domain; that stretch reads QGPFFYIGGT…TCQKSLHSQK (372 aa). Residues Lys301, 307-308, 350-353, 363-365, and 406-407 contribute to the ATP site; these read QG, QRYV, KFD, and TN. Gln307 provides a ligand contact to a protein. Mg(2+)-binding residues include Asp486, Glu499, and Asn501. Residues 565 to 704 form a disordered region; sequence LASSRPLNRL…EQRSTSHRGS (140 aa). 2 stretches are compositionally biased toward pro residues: residues 576-588 and 596-612; these read NPNP…ANPH and HPHP…PPRP. 2 stretches are compositionally biased toward low complexity: residues 616 to 629 and 654 to 667; these read AASS…AAIS and SDSS…SEPS.

Requires Mg(2+) as cofactor. In terms of tissue distribution, highly expressed in testis. Expressed in brain, heart, kidney, liver, lung, muscle and trachea.

It localises to the cytoplasm. Its subcellular location is the cytoskeleton. The protein localises to the cell projection. The protein resides in the cilium. It is found in the cilium axoneme. It catalyses the reaction (glycyl)(n)-glycyl-L-glutamyl-[protein] + glycine + ATP = (glycyl)(n+1)-glycyl-L-glutamyl-[protein] + ADP + phosphate + H(+). Polyglycylase which modifies both tubulin and non-tubulin proteins, generating polyglycine side chains of variable lengths on the gamma-carboxyl groups of specific glutamate residues of target proteins. Involved in the elongation step rather than the initiation step of the polyglycylation reaction. Polyglycylates alpha-tubulin and beta-tubulin. Polyglycylates non-tubulin proteins such as nucleosome assembly protein NAP1. In Mus musculus (Mouse), this protein is Protein polyglycylase TTLL10.